The following is a 184-amino-acid chain: Dual specificity protein phosphatase 22 (184 aa).

Glycine 2 carries N-myristoyl glycine lipidation. A Tyrosine-protein phosphatase domain is found at 4 to 144; the sequence is GMNKILPGLY…LQEFEKHEVH (141 aa). Position 58 is a phosphoserine (serine 58). Cysteine 88 (phosphocysteine intermediate) is an active-site residue. Residues leucine 89, alanine 90, valine 92, serine 93, and arginine 94 each contribute to the a protein site.

Belongs to the protein-tyrosine phosphatase family. Non-receptor class dual specificity subfamily. As to quaternary structure, monomer. Interacts with LCK; the interaction is direct. Interacts with UBR2; the interaction is direct. Myristoylation regulates subcellular location, and is necessary for activation of JNK. In terms of tissue distribution, ubiquitous. Highest expression seen in heart, placenta, lung, liver, kidney and pancreas.

The protein localises to the cytoplasm. It carries out the reaction O-phospho-L-tyrosyl-[protein] + H2O = L-tyrosyl-[protein] + phosphate. It catalyses the reaction O-phospho-L-seryl-[protein] + H2O = L-seryl-[protein] + phosphate. The enzyme catalyses O-phospho-L-threonyl-[protein] + H2O = L-threonyl-[protein] + phosphate. Functionally, dual specificity phosphatase; can dephosphorylate both phosphotyrosine and phosphoserine or phosphothreonine residues. Activates the JNK signaling pathway. Inhibits T-cell receptor signaling and T-cell mediated immune responses, acting, at least in part, by inducing degradation of E3 ubiquitin ligase UBR2. Dephosphorylates and thereby induces 'Lys-48'-linked ubiquitination of UBR2, leading to proteasomal degradation of UBR2. Dephosphorylates and thereby inactivates tyrosine kinase LCK. Inhibits UBR2-mediated 'Lys-63'-linked ubiquitination of LCK. May play a role in B-cell receptor (BCR) signaling and B-cell function. This Homo sapiens (Human) protein is Dual specificity protein phosphatase 22 (DUSP22).